Consider the following 1187-residue polypeptide: Protein CHROMATIN REMODELING 8 (1187 aa).

A disordered region spans residues 1-55 (MEEDEDQFLLSSLGVTSANPEDLEQKILDEATKKPDNDEGGSVEEKSTQLEGTNL). Over residues 9–19 (LLSSLGVTSAN) the composition is skewed to polar residues. Residues 23 to 48 (LEQKILDEATKKPDNDEGGSVEEKST) show a composition bias toward basic and acidic residues. The stretch at 110–170 (LQHALATDRL…LKRKLKEIRK (61 aa)) forms a coiled coil. Positions 162–169 (KRKLKEIR) match the Nuclear localization signal 1 motif. Disordered regions lie at residues 223–247 (GFER…DENE) and 273–343 (DAED…DGRR). Short sequence motifs (nuclear localization signal) lie at residues 290 to 297 (LRKLYKTP) and 310 to 317 (GKKSKKTR). Basic residues predominate over residues 305–328 (KKRKAGKKSKKTRPLPEKKWRKRI). In terms of domain architecture, Helicase ATP-binding spans 397 to 594 (WELHCQRAGG…WSLFDFVFPG (198 aa)). 410 to 417 (DEMGLGKT) provides a ligand contact to ATP. Positions 467 to 501 (SAQDSGHGKGQGKASESDYDSESSVDSDHEPKSKN) are disordered. The span at 492 to 501 (DSDHEPKSKN) shows a compositional bias: basic and acidic residues. A DEGH box motif is present at residues 545–548 (DEGH). The Helicase C-terminal domain occupies 730–890 (KVVAEVLKVW…RRFFKARDMK (161 aa)). The stretch at 987 to 1016 (NANDEEEKMRLEHQASQVAQRAAEALRQSR) forms a coiled coil. Residues 1050–1059 (VNSRLTQTGD) are compositionally biased toward polar residues. The tract at residues 1050-1075 (VNSRLTQTGDKPSAIKNGISAGLSSG) is disordered.

The protein belongs to the SNF2/RAD54 helicase family. In terms of assembly, homodimer. Binds DNA.

The protein localises to the nucleus. Functionally, essential factor involved in transcription-coupled nucleotide excision repair (TCR) which allows RNA polymerase II-blocking lesions to be rapidly removed from the transcribed strand of active genes. Upon DNA-binding, it locally modifies DNA conformation by wrapping the DNA around itself, thereby modifying the interface between stalled RNA polymerase II and DNA. It is required for transcription-coupled repair complex formation. This chain is Protein CHROMATIN REMODELING 8, found in Arabidopsis thaliana (Mouse-ear cress).